The chain runs to 497 residues: Anthranilate synthase component 1 (497 aa).

L-tryptophan contacts are provided by residues serine 49 and 271–273 (PYL). Residue 312-313 (GT) coordinates chorismate. Residue glutamate 339 coordinates Mg(2+). Chorismate contacts are provided by residues arginine 447, 461-463 (GAG), and glycine 463. Position 476 (glutamate 476) interacts with Mg(2+).

Belongs to the anthranilate synthase component I family. Heterotetramer consisting of two non-identical subunits: a beta subunit (TrpG) and a large alpha subunit (TrpE). It depends on Mg(2+) as a cofactor.

The enzyme catalyses chorismate + L-glutamine = anthranilate + pyruvate + L-glutamate + H(+). It participates in amino-acid biosynthesis; L-tryptophan biosynthesis; L-tryptophan from chorismate: step 1/5. With respect to regulation, feedback inhibited by tryptophan. In terms of biological role, part of a heterotetrameric complex that catalyzes the two-step biosynthesis of anthranilate, an intermediate in the biosynthesis of L-tryptophan. In the first step, the glutamine-binding beta subunit (TrpG) of anthranilate synthase (AS) provides the glutamine amidotransferase activity which generates ammonia as a substrate that, along with chorismate, is used in the second step, catalyzed by the large alpha subunit of AS (TrpE) to produce anthranilate. In the absence of TrpG, TrpE can synthesize anthranilate directly from chorismate and high concentrations of ammonia. The polypeptide is Anthranilate synthase component 1 (trpE) (Acinetobacter calcoaceticus).